Consider the following 53-residue polypeptide: MAKWRCKICGYIYDEDEGDPDNGISPGTKFEDLPDDWVCPLCGAPKSEFERIE.

Residues 1–52 (MAKWRCKICGYIYDEDEGDPDNGISPGTKFEDLPDDWVCPLCGAPKSEFERI) form the Rubredoxin-like domain. Cys-6, Cys-9, Cys-39, and Cys-42 together coordinate Fe cation.

Belongs to the rubredoxin family. Fe(3+) serves as cofactor.

Functionally, rubredoxin is a small nonheme, iron protein lacking acid-labile sulfide. Its single Fe, chelated to 4 Cys, functions as an electron acceptor and may also stabilize the conformation of the molecule. The chain is Rubredoxin (rub) from Pyrococcus abyssi (strain GE5 / Orsay).